Here is a 75-residue protein sequence, read N- to C-terminus: UPF0352 protein ASA_2693 (75 aa).

This sequence belongs to the UPF0352 family.

This Aeromonas salmonicida (strain A449) protein is UPF0352 protein ASA_2693.